The chain runs to 139 residues: MPAALLPGAGCPCGRLGASGKPLAFAQCCGRYLDDFAGTPAPDAESLMRSRYCAFVRERADYLLATWHASQRPPSIDFDPGVKWLGLEVRQHRQLDATHAEVEFVARQKSPGSPAVRLHERSRFVHEAGRWYYVDGDTR.

It belongs to the UPF0225 family.

The polypeptide is UPF0225 protein Bpro_4182 (Polaromonas sp. (strain JS666 / ATCC BAA-500)).